Reading from the N-terminus, the 616-residue chain is Dihydroxy-acid dehydratase (616 aa).

Asp-81 is a binding site for Mg(2+). Residue Cys-122 participates in [2Fe-2S] cluster binding. 2 residues coordinate Mg(2+): Asp-123 and Lys-124. At Lys-124 the chain carries N6-carboxylysine. Cys-195 contacts [2Fe-2S] cluster. Residue Glu-491 coordinates Mg(2+). The active-site Proton acceptor is Ser-517.

This sequence belongs to the IlvD/Edd family. Homodimer. The cofactor is [2Fe-2S] cluster. Requires Mg(2+) as cofactor.

The enzyme catalyses (2R)-2,3-dihydroxy-3-methylbutanoate = 3-methyl-2-oxobutanoate + H2O. It carries out the reaction (2R,3R)-2,3-dihydroxy-3-methylpentanoate = (S)-3-methyl-2-oxopentanoate + H2O. The protein operates within amino-acid biosynthesis; L-isoleucine biosynthesis; L-isoleucine from 2-oxobutanoate: step 3/4. It functions in the pathway amino-acid biosynthesis; L-valine biosynthesis; L-valine from pyruvate: step 3/4. In terms of biological role, functions in the biosynthesis of branched-chain amino acids. Catalyzes the dehydration of (2R,3R)-2,3-dihydroxy-3-methylpentanoate (2,3-dihydroxy-3-methylvalerate) into 2-oxo-3-methylpentanoate (2-oxo-3-methylvalerate) and of (2R)-2,3-dihydroxy-3-methylbutanoate (2,3-dihydroxyisovalerate) into 2-oxo-3-methylbutanoate (2-oxoisovalerate), the penultimate precursor to L-isoleucine and L-valine, respectively. The sequence is that of Dihydroxy-acid dehydratase from Yersinia enterocolitica serotype O:8 / biotype 1B (strain NCTC 13174 / 8081).